The primary structure comprises 396 residues: NADH-ubiquinone oxidoreductase 49 kDa subunit (396 aa).

It belongs to the complex I 49 kDa subunit family.

The protein resides in the mitochondrion. It catalyses the reaction a ubiquinone + NADH + 5 H(+)(in) = a ubiquinol + NAD(+) + 4 H(+)(out). Functionally, core subunit of the mitochondrial membrane respiratory chain NADH dehydrogenase (Complex I) that is believed to belong to the minimal assembly required for catalysis. Complex I functions in the transfer of electrons from NADH to the respiratory chain. The immediate electron acceptor for the enzyme is believed to be ubiquinone. Component of the iron-sulfur (IP) fragment of the enzyme. Component of the iron-sulfur (IP) fragment of the enzyme. The sequence is that of NADH-ubiquinone oxidoreductase 49 kDa subunit (NAD7) from Reclinomonas americana.